A 181-amino-acid polypeptide reads, in one-letter code: MIQDSEFFRMEGVPITKEEIRAVSIGKLNLDPEDIVLDIGCGSGGMSVEIAKRSKFVYSIDNSEDAKNTTSINLKKFKIENCEVFLGDAKDLISKFDFNKVFIGGTQNIEQILEILKEKKVEKVVANTIVLENGVKIISKFEELGYNVDFVNVSVSYGKKISSGHIMLSKNPITIITATLK.

S-adenosyl-L-methionine contacts are provided by residues threonine 16, 40–44 (GCGSG), aspartate 61, and alanine 89.

It belongs to the methyltransferase superfamily. Archaeal-type CbiT family.

The catalysed reaction is Co-precorrin-6B + S-adenosyl-L-methionine = Co-precorrin-7 + S-adenosyl-L-homocysteine + CO2. Its pathway is cofactor biosynthesis; adenosylcobalamin biosynthesis; cob(II)yrinate a,c-diamide from sirohydrochlorin (anaerobic route): step 8/10. In terms of biological role, catalyzes the methylation of C-15 in cobalt-precorrin-6B followed by the decarboxylation of C-12 to form cobalt-precorrin-7. The polypeptide is Probable cobalt-precorrin-6B C(15)-methyltransferase (decarboxylating) (Methanococcus maripaludis (strain C6 / ATCC BAA-1332)).